Reading from the N-terminus, the 82-residue chain is Small ribosomal subunit protein bS16 (82 aa).

The protein belongs to the bacterial ribosomal protein bS16 family.

The sequence is that of Small ribosomal subunit protein bS16 from Vibrio cholerae serotype O1 (strain ATCC 39541 / Classical Ogawa 395 / O395).